A 307-amino-acid chain; its full sequence is UDP-3-O-acyl-N-acetylglucosamine deacetylase (307 aa).

His80, His239, and Asp243 together coordinate Zn(2+). Catalysis depends on His266, which acts as the Proton donor.

It belongs to the LpxC family. Zn(2+) is required as a cofactor.

It carries out the reaction a UDP-3-O-[(3R)-3-hydroxyacyl]-N-acetyl-alpha-D-glucosamine + H2O = a UDP-3-O-[(3R)-3-hydroxyacyl]-alpha-D-glucosamine + acetate. It participates in glycolipid biosynthesis; lipid IV(A) biosynthesis; lipid IV(A) from (3R)-3-hydroxytetradecanoyl-[acyl-carrier-protein] and UDP-N-acetyl-alpha-D-glucosamine: step 2/6. Catalyzes the hydrolysis of UDP-3-O-myristoyl-N-acetylglucosamine to form UDP-3-O-myristoylglucosamine and acetate, the committed step in lipid A biosynthesis. The polypeptide is UDP-3-O-acyl-N-acetylglucosamine deacetylase (Neisseria gonorrhoeae (strain ATCC 700825 / FA 1090)).